A 1173-amino-acid polypeptide reads, in one-letter code: Fas-binding factor 1 (1173 aa).

A disordered region spans residues methionine 17–tyrosine 168. Residues lysine 46–aspartate 56 show a composition bias toward basic and acidic residues. The span at alanine 80–aspartate 93 shows a compositional bias: low complexity. Residue serine 172 is modified to Phosphoserine. 2 disordered regions span residues leucine 180 to proline 225 and threonine 241 to glutamate 566. Over residues serine 206–serine 216 the composition is skewed to low complexity. 2 stretches are compositionally biased toward basic and acidic residues: residues aspartate 247–aspartate 258 and threonine 287–tyrosine 299. 4 stretches are compositionally biased toward polar residues: residues valine 331 to serine 345, serine 396 to serine 411, valine 468 to leucine 477, and threonine 533 to threonine 544. Coiled coils occupy residues threonine 617 to serine 742, glutamine 808 to cysteine 917, and cysteine 975 to glutamine 1057. Lysine 1002 is covalently cross-linked (Glycyl lysine isopeptide (Lys-Gly) (interchain with G-Cter in SUMO2)). A disordered region spans residues alanine 1091 to proline 1124. Positions alanine 1110–proline 1124 are enriched in low complexity.

In terms of assembly, interacts with PARD3. May interact with FAS cytoplasmic domain. Interacts with TRAPPC14. In terms of tissue distribution, broadly expressed.

It localises to the cytoplasm. The protein resides in the cytoskeleton. Its subcellular location is the microtubule organizing center. It is found in the centrosome. The protein localises to the centriole. It localises to the spindle pole. The protein resides in the cell junction. Keratin-binding protein required for epithelial cell polarization. Involved in apical junction complex (AJC) assembly via its interaction with PARD3. Required for ciliogenesis. The chain is Fas-binding factor 1 (Fbf1) from Mus musculus (Mouse).